A 469-amino-acid chain; its full sequence is Gustatory receptor for sugar taste 64f (469 aa).

Topologically, residues 1 to 117 (MKILPKLERK…SFSWRNIRTC (117 aa)) are cytoplasmic. The chain crosses the membrane as a helical span at residues 118–138 (FSLLFIASSLANFGLSLFKVL). Residues 139–146 (NNPISFNS) are Extracellular-facing. The helical transmembrane segment at 147–167 (IKPIIFRGSVLLVLIVALNLA) threads the bilayer. The Cytoplasmic portion of the chain corresponds to 168 to 199 (RQWPQLMMYWHTVEKDLPQYKTQLTKWKMGHT). The helical transmembrane segment at 200–220 (ISMVMLLGMMLSFAEHILSMV) threads the bilayer. Residues 221 to 265 (SAINYASFCNRTADPIQNYFLRTNDEIFFVTSYSTTLALWGKFQN) lie on the Extracellular side of the membrane. N-linked (GlcNAc...) asparagine glycosylation occurs at N230. The helical transmembrane segment at 266-286 (VFSTFIWNYMDLFVMIVSIGL) threads the bilayer. The Cytoplasmic portion of the chain corresponds to 287–330 (ASKFRQLNDDLRNFKGMNMAPSYWSERRIQYRNICILCDKMDDA). A helical membrane pass occupies residues 331–351 (ISLITMVSFSNNLYFICVQLL). Over 352–353 (RS) the chain is Extracellular. A helical transmembrane segment spans residues 354–374 (LNTMPSVAHAVYFYFSLIFLI). The Cytoplasmic segment spans residues 375–435 (GRTLAVSLYS…GMKFFHLTRK (61 aa)). Residues 436-456 (LVLSVAGTIVTYELVLIQFHE) traverse the membrane as a helical segment. At 457 to 469 (DNDLWDCDQSYYS) the chain is on the extracellular side.

It belongs to the insect chemoreceptor superfamily. Gustatory receptor (GR) family. Gr5a subfamily. In terms of tissue distribution, expressed in Gr5a-expressing sugar-sensing cells.

It is found in the cell membrane. Its function is as follows. One of the few identified sugar gustatory receptors identified so far and which promotes the starvation-induced increase of feeding motivation. Required in combination with Gr64a to detect sucrose, maltose, and glucose. This chain is Gustatory receptor for sugar taste 64f (Gr64f), found in Drosophila melanogaster (Fruit fly).